A 251-amino-acid chain; its full sequence is PF03932 family protein CutC (251 aa).

This sequence belongs to the CutC family.

The protein resides in the cytoplasm. In Bacteroides fragilis (strain ATCC 25285 / DSM 2151 / CCUG 4856 / JCM 11019 / LMG 10263 / NCTC 9343 / Onslow / VPI 2553 / EN-2), this protein is PF03932 family protein CutC.